The sequence spans 170 residues: Methanogen homoaconitase small subunit (170 aa).

Residues 26–29 carry the YLRT motif; the sequence is YLRT.

It belongs to the LeuD family. LeuD type 2 subfamily. Heterotetramer of 2 HacA and 2 HacB proteins.

The catalysed reaction is (2R)-homocitrate = (2R,3S)-homoisocitrate. It carries out the reaction (2R)-homocitrate = cis-homoaconitate + H2O. The enzyme catalyses (2R,3S)-homoisocitrate = cis-homoaconitate + H2O. It catalyses the reaction cis-(homo)2aconitate + H2O = (2R,3S)-iso(homo)2citrate. The catalysed reaction is cis-(homo)3aconitate + H2O = (2R,3S)-iso(homo)3citrate. The protein operates within organic acid metabolism; 2-oxosuberate biosynthesis. In terms of biological role, component of a hydro-lyase with broad substrate specificity for cis-unsaturated tricarboxylic acids. Catalyzes both the reversible dehydration of (R)-homocitrate ((R)-2-hydroxybutane-1,2,4-tricarboxylate) to produce cis-homoaconitate ((Z)-but-1-ene-1,2,4-tricarboxylate), and its hydration to homoisocitrate ((1R,2S)-1-hydroxybutane-1,2,4-tricarboxylate). Is also able to hydrate the analogous longer chain substrates cis-homo(2)-aconitate, cis-homo(3)-aconitate. These reactions are part of the biosynthesis pathway of coenzyme B. The protein is Methanogen homoaconitase small subunit (hacB) of Methanothermobacter thermautotrophicus (strain ATCC 29096 / DSM 1053 / JCM 10044 / NBRC 100330 / Delta H) (Methanobacterium thermoautotrophicum).